The sequence spans 217 residues: Nascent polypeptide-associated complex subunit alpha (217 aa).

A disordered region spans residues 1–45; that stretch reads MPELTEIKSEAAPSTSAEAKPEDVRVEDDGSDSDSDGGMPGLEEA. Positions 19–28 are enriched in basic and acidic residues; it reads AKPEDVRVED. One can recognise an NAC-A/B domain in the interval 70–135; the sequence is SRGEKKARKI…AKIEDLSQQA (66 aa). The disordered stretch occupies residues 154 to 177; the sequence is SVGATTSVAPIAEEDEEDVDDTGV. The span at 165–176 shows a compositional bias: acidic residues; it reads AEEDEEDVDDTG. Residues 177–217 enclose the UBA domain; that stretch reads VDEKDIELVITQANTTRAKAIKALKNNNNDIVNAIMELTML.

This sequence belongs to the NAC-alpha family. As to quaternary structure, part of the nascent polypeptide-associated complex (NAC), consisting of Nac-alpha and bicaudal (bic).

Functionally, may promote appropriate targeting of ribosome-nascent polypeptide complexes. Required for correct localization of the osk/oskar protein to the posterior pole during embryonic development. The osk protein directs the recruitment of molecules responsible for posterior body patterning and germline formation in the embryo. The polypeptide is Nascent polypeptide-associated complex subunit alpha (Nacalpha) (Drosophila melanogaster (Fruit fly)).